Here is a 410-residue protein sequence, read N- to C-terminus: MAARRSLRYSGDPGAKRSRNTLGSTNSRKQKAGQKPKRKDVFDFPNTSDVSSMLRELEEEEPYETFDPPLHSTAIYTDDELYKHCVSSTSPATHRGKESRNLNPSENEASGNDSIKLSAKKPRRKLEPISDESDSSEDNVRRSVSIERPRARKPPAAPAAASSSSSPSERPAEQVTPRKTSFPQPSAVEETPAAQSQLKTQKKVRPSPGRRKRPRRGSTHSDASESMHILCLEGKRQSDVMELDVVLSAFERTFLDYKQRVESESCNQAISKFYFKIKGELIRMLKEVQMLKALKRKNTKIISNMEKKRQRLIDVQDELIRLEPQLKQLQTKYDDLKKRKSALKNSKHFLSNLKQLYQDYSNVREEEPKEKEKYDSSSLPALLFKARSILGAEKHLKTINYHLGKLLKQD.

The tract at residues 1–72 (MAARRSLRYS…YETFDPPLHS (72 aa)) is disordered. Positions 4 to 21 (RRSLRYSGDPGAKRSRNT) match the Nuclear localization signal motif. The segment covering 28–38 (RKQKAGQKPKR) has biased composition (basic residues). Residue Thr73 is modified to Phosphothreonine; by PLK1. Residues 87–228 (SSTSPATHRG…THSDASESMH (142 aa)) are disordered. Residues 101–115 (NLNPSENEASGNDSI) show a composition bias toward polar residues. 6 positions are modified to phosphoserine: Ser105, Ser110, Ser114, Ser130, Ser133, and Ser135. The span at 138-149 (DNVRRSVSIERP) shows a compositional bias: basic and acidic residues. Residues 158–169 (PAAASSSSSPSE) are compositionally biased toward low complexity. A Glycyl lysine isopeptide (Lys-Gly) (interchain with G-Cter in SUMO2) cross-link involves residue Lys179. Residue Ser186 is modified to Phosphoserine. The residue at position 191 (Thr191) is a Phosphothreonine. The segment covering 200 to 218 (TQKKVRPSPGRRKRPRRGS) has biased composition (basic residues). Ser224 carries the phosphoserine modification. Positions 289–352 (QMLKALKRKN…LKNSKHFLSN (64 aa)) form a coiled coil. A Nuclear localization signal motif is present at residues 295–312 (KRKNTKIISNMEKKRQRL).

Belongs to the CENP-U/AME1 family. As to quaternary structure, component of the CENPA-NAC complex, at least composed of CENPA, CENPC, CENPH, CENPM, CENPN, CENPT and CENPU. The CENPA-NAC complex interacts with the CENPA-CAD complex, composed of CENPI, CENPK, CENPL, CENPO, CENPP, CENPQ, CENPR and CENPS. Interacts with MLF1. Post-translationally, phosphorylated by PLK1 at Thr-73, creating a self-tethering site that specifically interacts with the polo-box domain of PLK1. Expressed at high levels in glioblastoma cell lines. Up-regulated in GBM (glioblastoma multiforme) tumors. Significantly increased in both the tumor core as well as the contralateral striatum and cortex in gliomas.

Its subcellular location is the cytoplasm. It is found in the nucleus. It localises to the chromosome. The protein localises to the centromere. The protein resides in the kinetochore. Functionally, component of the CENPA-NAC (nucleosome-associated) complex, a complex that plays a central role in assembly of kinetochore proteins, mitotic progression and chromosome segregation. The CENPA-NAC complex recruits the CENPA-CAD (nucleosome distal) complex and may be involved in incorporation of newly synthesized CENPA into centromeres. Plays an important role in the correct PLK1 localization to the mitotic kinetochores. A scaffold protein responsible for the initial recruitment and maintenance of the kinetochore PLK1 population until its degradation. Involved in transcriptional repression. This is Centromere protein U (Cenpu) from Rattus norvegicus (Rat).